We begin with the raw amino-acid sequence, 268 residues long: Tropinone reductase homolog (268 aa).

Residue 21-45 participates in NADP(+) binding; it reads LVTGGTRGIGYAIVEELANFGAEVY. Residue S154 participates in substrate binding. The active-site Proton acceptor is Y167.

It belongs to the short-chain dehydrogenases/reductases (SDR) family.

In Datura stramonium (Jimsonweed), this protein is Tropinone reductase homolog.